A 1683-amino-acid polypeptide reads, in one-letter code: Genome polyprotein (1683 aa).

Over 1–445 (MRCIGISNRD…LHQVFGAIYG (445 aa)) the chain is Extracellular. 4 disulfides stabilise this stretch: Cys3-Cys30, Cys60-Cys121, Cys74-Cys105, and Cys92-Cys116. N-linked (GlcNAc...) asparagine; by host glycosylation occurs at Asn67. Residues 98 to 111 (DRGWGNGCGLFGKG) form a fusion peptide region. Asn153 carries an N-linked (GlcNAc...) asparagine; by host glycan. 2 disulfide bridges follow: Cys185-Cys285 and Cys302-Cys333. The chain crosses the membrane as a helical span at residues 446-466 (AAFSGVSWTMKILIGVIITWI). The Cytoplasmic portion of the chain corresponds to 467–472 (GMNSRS). Residues 473–493 (TSLSVSLVLVGIVTLYLGVMV) traverse the membrane as a helical segment. Topologically, residues 494 to 915 (QADSGCVVSW…MVGATMTDDI (422 aa)) are extracellular. Disulfide bonds link Cys499-Cys510, Cys550-Cys638, Cys674-Cys718, Cys775-Cys824, Cys786-Cys808, and Cys807-Cys811. The N-linked (GlcNAc...) asparagine; by host glycan is linked to Asn702. A helical membrane pass occupies residues 916 to 940 (GMGVTYLALLAAFRVRPTFAAGLLL). The Cytoplasmic portion of the chain corresponds to 941–946 (RKLTSK). A helical transmembrane segment spans residues 947–965 (ELMMTTIGIVLLSQSSIPE). The Lumenal segment spans residues 966 to 989 (TILELTDALALGMMVLKMVRNMEK). Residues 990 to 1010 (YQLAVTIMAILCVPNAVILQN) traverse the membrane as a helical segment. Position 1011 (Ala1011) is a topological domain, cytoplasmic. A helical transmembrane segment spans residues 1012–1030 (WKVSCTILAVVSVSPLLLT). Over 1031–1037 (SSQQKAD) the chain is Lumenal. A helical membrane pass occupies residues 1038–1058 (WIPLALTIKGLNPTAIFLTTL). The Cytoplasmic portion of the chain corresponds to 1059-1683 (SRTSKKRAGV…EFKEFAAGRK (625 aa)). The 178-residue stretch at 1066–1243 (AGVLWDVPSP…EKSIEDNPEI (178 aa)) folds into the Peptidase S7 domain. Active-site charge relay system; for serine protease NS3 activity residues include His1116, Asp1140, and Ser1200. Residues 1245-1401 (DDIFRKRRLT…QSNAPIMDEE (157 aa)) enclose the Helicase ATP-binding domain. An important for RNA-binding region spans residues 1249-1252 (RKRR). 1258-1265 (LHPGAGKT) serves as a coordination point for ATP. Residues 1349–1352 (DEAH) carry the DEAH box motif. Positions 1411–1582 (SGHEWVTDFK…IFEPEREKVD (172 aa)) constitute a Helicase C-terminal domain.

As to quaternary structure, capsid protein C: Homodimer. Interacts (via N-terminus) with host EXOC1 (via C-terminus); this interaction results in EXOC1 degradation through the proteasome degradation pathway. Protein prM: Forms heterodimers with envelope protein E in the endoplasmic reticulum and Golgi. Homodimer; in the endoplasmic reticulum and Golgi. Interacts with protein prM. Interacts with non-structural protein 1. In terms of assembly, homodimer; Homohexamer when secreted. Interacts with envelope protein E. As to quaternary structure, interacts (via N-terminus) with serine protease NS3. Non-structural protein 2B: Forms a heterodimer with serine protease NS3. May form homooligomers. Forms a heterodimer with NS2B. Interacts with NS4B. Interacts with unphosphorylated RNA-directed RNA polymerase NS5; this interaction stimulates RNA-directed RNA polymerase NS5 guanylyltransferase activity. Interacts with host SHFL. Post-translationally, specific enzymatic cleavages in vivo yield mature proteins. Cleavages in the lumen of endoplasmic reticulum are performed by host signal peptidase, wereas cleavages in the cytoplasmic side are performed by the Serine protease NS3. Signal cleavage at the 2K-4B site requires a prior NS3 protease-mediated cleavage at the 4A-2K site. N-glycosylated. The excreted form is glycosylated and this is required for efficient secretion of the protein from infected cells. In terms of processing, N-glycosylated. Post-translationally, specific enzymatic cleavages in vivo yield mature proteins. Cleavages in the lumen of endoplasmic reticulum are performed by host signal peptidase, wereas cleavages in the cytoplasmic side are performed by serine protease NS3. Signal cleavage at the 2K-4B site requires a prior NS3 protease-mediated cleavage at the 4A-2K site.

It is found in the virion membrane. Its subcellular location is the host endoplasmic reticulum membrane. The protein resides in the secreted. The enzyme catalyses Selective hydrolysis of -Xaa-Xaa-|-Yaa- bonds in which each of the Xaa can be either Arg or Lys and Yaa can be either Ser or Ala.. The catalysed reaction is a ribonucleoside 5'-triphosphate + H2O = a ribonucleoside 5'-diphosphate + phosphate + H(+). It catalyses the reaction ATP + H2O = ADP + phosphate + H(+). Functionally, binds to host cell surface receptor and mediates fusion between viral and cellular membranes. Envelope protein is synthesized in the endoplasmic reticulum in the form of heterodimer with protein prM. They play a role in virion budding in the ER, and the newly formed immature particle is covered with 60 spikes composed of heterodimer between precursor prM and envelope protein E. The virion is transported to the Golgi apparatus where the low pH causes dissociation of PrM-E heterodimers and formation of E homodimers. prM-E cleavage is inefficient, and many virions are only partially matured. These uncleaved prM would play a role in immune evasion. Its function is as follows. Involved in immune evasion, pathogenesis and viral replication. Once cleaved off the polyprotein, is targeted to three destinations: the viral replication cycle, the plasma membrane and the extracellular compartment. Essential for viral replication. Required for formation of the replication complex and recruitment of other non-structural proteins to the ER-derived membrane structures. Excreted as a hexameric lipoparticle that plays a role against host immune response. Antagonizing the complement function. Binds to the host macrophages and dendritic cells. Inhibits signal transduction originating from Toll-like receptor 3 (TLR3). Disrupts the host endothelial glycocalyx layer of host pulmonary microvascular endothelial cells, inducing degradation of sialic acid and shedding of heparan sulfate proteoglycans. NS1 induces expression of sialidases, heparanase, and activates cathepsin L, which activates heparanase via enzymatic cleavage. These effects are probably linked to the endothelial hyperpermeability observed in severe dengue disease. In terms of biological role, component of the viral RNA replication complex that functions in virion assembly and antagonizes the host immune response. Functionally, serine protease subunit NS2B: Required cofactor for the serine protease function of NS3. May have membrane-destabilizing activity and form viroporins. Its function is as follows. Displays three enzymatic activities: serine protease, NTPase and RNA helicase. NS3 serine protease, in association with NS2B, performs its autocleavage and cleaves the polyprotein at dibasic sites in the cytoplasm: C-prM, NS2A-NS2B, NS2B-NS3, NS3-NS4A, NS4A-2K and NS4B-NS5. NS3 RNA helicase binds RNA and unwinds dsRNA in the 3' to 5' direction. The sequence is that of Genome polyprotein from Aedimorphus (Red guenon).